The following is a 199-amino-acid chain: dITP/XTP pyrophosphatase (199 aa).

7–12 (SNNRGK) lines the substrate pocket. Mg(2+)-binding residues include D39 and D68. D68 functions as the Proton acceptor in the catalytic mechanism. Substrate contacts are provided by residues A69, 154–157 (FGFD), K177, and 182–183 (HR).

The protein belongs to the HAM1 NTPase family. As to quaternary structure, homodimer. Mg(2+) is required as a cofactor.

The enzyme catalyses XTP + H2O = XMP + diphosphate + H(+). The catalysed reaction is dITP + H2O = dIMP + diphosphate + H(+). It catalyses the reaction ITP + H2O = IMP + diphosphate + H(+). Functionally, pyrophosphatase that catalyzes the hydrolysis of nucleoside triphosphates to their monophosphate derivatives, with a high preference for the non-canonical purine nucleotides XTP (xanthosine triphosphate), dITP (deoxyinosine triphosphate) and ITP. Seems to function as a house-cleaning enzyme that removes non-canonical purine nucleotides from the nucleotide pool, thus preventing their incorporation into DNA/RNA and avoiding chromosomal lesions. This Paracidovorax citrulli (strain AAC00-1) (Acidovorax citrulli) protein is dITP/XTP pyrophosphatase.